Reading from the N-terminus, the 730-residue chain is Rap1 GTPase-activating protein 2 (730 aa).

Ser7 bears the Phosphoserine; by PKG/PRKG1; in vitro mark. The interval 32-53 (ANSSDATLPDRPLSPPLTAPPT) is disordered. A Phosphoserine modification is found at Ser45. Thr49 bears the Phosphothreonine mark. Residues 248–464 (IVSYDEHEVN…RTRAALLDNL (217 aa)) enclose the Rap-GAP domain. Residue Ser507 is modified to Phosphoserine. The tract at residues 509-533 (ETMVGGQKKSHSGGIPGSLSGGISH) is disordered. 5 positions are modified to phosphoserine: Ser544, Ser558, Ser564, Ser612, and Ser613. The interval 552–730 (VKNQSRSPIK…LSHASSGAGH (179 aa)) is disordered. Residues 585–613 (DSTSSTPKTPDGGHSSQEIKSETSSNPSS) show a composition bias toward polar residues. The segment covering 618-631 (PNKEKPFMKLKENG) has biased composition (basic and acidic residues). Low complexity predominate over residues 635-647 (SRSSSSTSSVSST). The span at 661–670 (GSQPSTTSPF) shows a compositional bias: polar residues. Low complexity predominate over residues 678–687 (SPSPSSESPS). Positions 699-712 (RSPTDAKSRNSPRS) are enriched in polar residues.

Post-translationally, in vitro phosphorylated by cGMP-dependent protein kinase 1 (cGKI) at Ser-7; the phosphorylation probably does not regulate GAP activity. In terms of tissue distribution, isoform 1 and isoform 2 are expressed in platelets with isoform 2 being the predominant form. Expressed in lymphocytes, heart, testis and pancreas.

It localises to the cytoplasm. The protein localises to the perinuclear region. Functionally, GTPase activator for the nuclear Ras-related regulatory protein RAP-1A (KREV-1), converting it to the putatively inactive GDP-bound state. The protein is Rap1 GTPase-activating protein 2 (RAP1GAP2) of Homo sapiens (Human).